Consider the following 259-residue polypeptide: Src-like-adapter 2 (259 aa).

Positions 1-20 (MGSLSSRGKTSSPSPSSSGP) are enriched in low complexity. Residues 1 to 30 (MGSLSSRGKTSSPSPSSSGPDQEPVSMQPE) form a disordered region. The N-myristoyl glycine moiety is linked to residue G2. The 61-residue stretch at 31-91 (RHKVTAVALG…PSVYVAKVAH (61 aa)) folds into the SH3 domain. Residues 93–190 (WLYEGLSREK…GICCPLREPC (98 aa)) form the SH2 domain. The segment at 190–259 (CVLQKLGPLP…SLAEDPLDDA (70 aa)) is SLA C-terminal.

In terms of assembly, interacts (via its C-terminal domain) with CBL (phosphorylated). Interacts (via SH2 domain) with ZAP70 (phosphorylated) and CD3Z (phosphorylated). Interacts (via SH2 domain) with CSF1R (phosphorylated). Phosphorylated by CSF1R. In terms of tissue distribution, mainly expressed in immune system. Highly expressed in spleen and thymus and expressed at intermediate levels in lung. Not expressed in liver, heart and brain. Isoform 1 is predominant in lung and spleen, while isoform 2 is predominant in thymus.

It localises to the cytoplasm. It is found in the cell membrane. Its subcellular location is the cytoplasmic vesicle. The protein resides in the late endosome. Its function is as follows. Adapter protein, which negatively regulates T-cell receptor (TCR) signaling. Inhibits T-cell antigen-receptor induced activation of nuclear factor of activated T-cells. May act by linking signaling proteins such as ZAP70 with CBL, leading to a CBL dependent degradation of signaling proteins. The chain is Src-like-adapter 2 (Sla2) from Mus musculus (Mouse).